A 184-amino-acid polypeptide reads, in one-letter code: Tyrosine-protein kinase receptor Tie-1 (184 aa).

A Protein kinase domain is found at 1-164 (QLLQFAADVA…RMQEARKAYV (164 aa)). The active-site Proton acceptor is D25. Y53 bears the Phosphotyrosine; by autocatalysis mark.

The protein belongs to the protein kinase superfamily. Tyr protein kinase family. Tie subfamily. Interacts with svep1. Expressed in most populations of endothelial cells in 24 hours embryos, including the endocardium.

Its subcellular location is the cell membrane. It carries out the reaction L-tyrosyl-[protein] + ATP = O-phospho-L-tyrosyl-[protein] + ADP + H(+). In terms of biological role, transmembrane tyrosine-protein kinase. Required for the formation of facial lymphatic structures and brain lymphatic endothelial cells. Also required for embryonic ventral and dorsal migration of parachordal lymphoblasts along the arterial intersegmental vessel. Plays a role in the embryonic formation of the dorsal longitudinal anastomotic vessel. The sequence is that of Tyrosine-protein kinase receptor Tie-1 (tie1) from Danio rerio (Zebrafish).